The chain runs to 554 residues: Glucose-6-phosphate isomerase 2 (554 aa).

E359 serves as the catalytic Proton donor. Active-site residues include H390 and K518.

Belongs to the GPI family.

It is found in the cytoplasm. The catalysed reaction is alpha-D-glucose 6-phosphate = beta-D-fructose 6-phosphate. It functions in the pathway carbohydrate biosynthesis; gluconeogenesis. The protein operates within carbohydrate degradation; glycolysis; D-glyceraldehyde 3-phosphate and glycerone phosphate from D-glucose: step 2/4. Catalyzes the reversible isomerization of glucose-6-phosphate to fructose-6-phosphate. The protein is Glucose-6-phosphate isomerase 2 of Pseudomonas putida (strain ATCC 47054 / DSM 6125 / CFBP 8728 / NCIMB 11950 / KT2440).